A 164-amino-acid chain; its full sequence is UPF0262 protein Xaut_1232 (164 aa).

The protein belongs to the UPF0262 family.

The chain is UPF0262 protein Xaut_1232 from Xanthobacter autotrophicus (strain ATCC BAA-1158 / Py2).